Reading from the N-terminus, the 524-residue chain is Ribonuclease Y (524 aa).

The helical transmembrane segment at 2–22 (GIVINLFLIIAASIVFFVVGF) threads the bilayer. One can recognise a KH domain in the interval 214–299 (ALSVVHIQSD…KAYQDAKKEI (86 aa)). An HD domain is found at 340 to 432 (LLQHSREVAM…VDAANIVSLS (93 aa)).

This sequence belongs to the RNase Y family.

The protein localises to the cell membrane. Endoribonuclease that initiates mRNA decay. In Chlorobaculum tepidum (strain ATCC 49652 / DSM 12025 / NBRC 103806 / TLS) (Chlorobium tepidum), this protein is Ribonuclease Y.